The following is a 521-amino-acid chain: MASLFHLRFLKPLSCLQAGLLYSLIFGVLYHFPLFVYVYKESNQVSFIAMMVVVLFCVNGALFLALGLISASLMRWSAIVFSLLNSVAFYFISAYKVFLNKSMMGNVLNTNTHEVLGFLSVKLFVFIVVFGVLPGYVIYKIPLKNSSKKAPFLAILALVFIFIASALANTKNWLWFDKHAKFIGGLILPFAYSVNAFRVSALKFFAPTIKPLPLFSPNHSHSFVVLVIGESARKHNYALYGYQKPTTPRLSKRLADNELTLFNATSCATYTTASLECILDSSFKNNAYENLPTYLTKAGIKVFWYSANDGEKNVKVTSYLKNYELIQKCPNCEAIAPYDESLLYNLPDLLKEHSNENVLLILHLAGSHGPNYDNKVPLNFRVFKPYCSSADLSSCSKESLINAYDNTIFYNDYLLDKIISMLENAKQPALMIYLSDHGESLGEEAFYLHGIPKSIAPKEQYEIPFIVYANEPFKEKHSIIQTQTPINQNVIFHSVLGVFLDFKNPSVVYRPSLDLLKHKKE.

A run of 6 helical transmembrane segments spans residues 18-38, 47-67, 79-99, 118-138, 150-170, and 182-202; these read AGLLYSLIFGVLYHFPLFVYV, FIAMMVVVLFCVNGALFLALG, IVFSLLNSVAFYFISAYKVFL, FLSVKLFVFIVVFGVLPGYVI, APFLAILALVFIFIASALANT, and FIGGLILPFAYSVNAFRVSAL.

The protein belongs to the phosphoethanolamine transferase family. EptA subfamily.

It localises to the cell inner membrane. It participates in bacterial outer membrane biogenesis; LPS lipid A biosynthesis. Probably catalyzes the addition of a phosphoethanolamine moiety to the dephosphorylated 1-position of the disaccharide backbone of lipid A. Lipid A that is 1-phosphorylated is not a substrate for this enzyme. The chain is Phosphoethanolamine transferase EptA from Helicobacter pylori (strain ATCC 700392 / 26695) (Campylobacter pylori).